The sequence spans 424 residues: Glutamyl-tRNA(Gln) amidotransferase subunit D (424 aa).

Residues 58 to 79 (NTNGGLNGGKEHKTAGEEVQKS) form a disordered region. A compositionally biased stretch (basic and acidic residues) spans 66 to 78 (GKEHKTAGEEVQK). Residues 84 to 406 (PKVAILSTGG…LGQTDEFNEA (323 aa)) form the Asparaginase/glutaminase domain. Residues Thr-94, Thr-170, Asp-171, and Lys-247 contribute to the active site.

It belongs to the asparaginase 1 family. GatD subfamily. As to quaternary structure, heterodimer of GatD and GatE.

The enzyme catalyses L-glutamyl-tRNA(Gln) + L-glutamine + ATP + H2O = L-glutaminyl-tRNA(Gln) + L-glutamate + ADP + phosphate + H(+). Its function is as follows. Allows the formation of correctly charged Gln-tRNA(Gln) through the transamidation of misacylated Glu-tRNA(Gln) in organisms which lack glutaminyl-tRNA synthetase. The reaction takes place in the presence of glutamine and ATP through an activated gamma-phospho-Glu-tRNA(Gln). The GatDE system is specific for glutamate and does not act on aspartate. In Methanosarcina barkeri (strain Fusaro / DSM 804), this protein is Glutamyl-tRNA(Gln) amidotransferase subunit D.